Here is a 246-residue protein sequence, read N- to C-terminus: UDP-N-acetyl-D-mannosaminuronic acid transferase (246 aa).

It belongs to the glycosyltransferase 26 family.

The catalysed reaction is UDP-N-acetyl-alpha-D-mannosaminouronate + N-acetyl-alpha-D-glucosaminyl-di-trans,octa-cis-undecaprenyl diphosphate = beta-D-ManNAcA-(1-&gt;4)-alpha-D-GlcNAc-di-trans,octa-cis-undecaprenyl diphosphate + UDP + H(+). It functions in the pathway bacterial outer membrane biogenesis; enterobacterial common antigen biosynthesis. Functionally, catalyzes the synthesis of Und-PP-GlcNAc-ManNAcA (Lipid II), the second lipid-linked intermediate involved in enterobacterial common antigen (ECA) synthesis. The chain is UDP-N-acetyl-D-mannosaminuronic acid transferase from Yersinia pestis bv. Antiqua (strain Antiqua).